A 682-amino-acid polypeptide reads, in one-letter code: Potassium-transporting ATPase ATP-binding subunit (682 aa).

The next 4 helical transmembrane spans lie at 34–54, 62–82, 219–239, and 254–274; these read PVMF…IAMA, ALFS…ANFA, IALT…TATL, and VLVA…LSAI. The active-site 4-aspartylphosphate intermediate is the D307. ATP-binding positions include D344, E348, 377–384, and K395; that span reads FTAQSRMS. Residues D518 and D522 each contribute to the Mg(2+) site. 3 helical membrane passes run 588 to 608, 616 to 636, and 656 to 676; these read FAII…LNIM, AILS…PLAL, and IYGL…DLLL.

Belongs to the cation transport ATPase (P-type) (TC 3.A.3) family. Type IA subfamily. As to quaternary structure, the system is composed of three essential subunits: KdpA, KdpB and KdpC.

The protein localises to the cell inner membrane. The enzyme catalyses K(+)(out) + ATP + H2O = K(+)(in) + ADP + phosphate + H(+). Its function is as follows. Part of the high-affinity ATP-driven potassium transport (or Kdp) system, which catalyzes the hydrolysis of ATP coupled with the electrogenic transport of potassium into the cytoplasm. This subunit is responsible for energy coupling to the transport system and for the release of the potassium ions to the cytoplasm. The polypeptide is Potassium-transporting ATPase ATP-binding subunit (Escherichia coli O8 (strain IAI1)).